The primary structure comprises 336 residues: N-acetylornithine carbamoyltransferase (336 aa).

Carbamoyl phosphate is bound by residues 49–52, W77, and R112; that span reads SMRT. N(2)-acetyl-L-ornithine is bound at residue E144. A carbamoyl phosphate-binding site is contributed by 148–151; sequence HPCQ. N(2)-acetyl-L-ornithine contacts are provided by K252 and L295. 294 to 295 is a carbamoyl phosphate binding site; sequence CL. Position 302 is an N6-carboxylysine (K302). Position 322 (R322) interacts with carbamoyl phosphate.

This sequence belongs to the aspartate/ornithine carbamoyltransferase superfamily. AOTCase family. As to quaternary structure, homotrimer.

It localises to the cytoplasm. The catalysed reaction is N(2)-acetyl-L-ornithine + carbamoyl phosphate = N(2)-acetyl-L-citrulline + phosphate + H(+). It participates in amino-acid biosynthesis; L-arginine biosynthesis. With respect to regulation, carboxylation at Lys-302 increases the catalytic activity of the enzyme. In terms of biological role, catalyzes the transfer of the carbamoyl group from carbamoyl phosphate to the delta-amino group of N(2)-acetyl-L-ornithine to produce N(2)-acetyl-L-citrulline. This is a step in an alternative arginine biosynthesis pathway. The enzyme has no activity with ornithine. This is N-acetylornithine carbamoyltransferase from Xylella fastidiosa (strain 9a5c).